Reading from the N-terminus, the 97-residue chain is Class II hydrophobin 1 (97 aa).

The first 16 residues, 1-16, serve as a signal peptide directing secretion; that stretch reads MKFFAIAALFAAAAVA. Residues 17 to 22 constitute a propeptide that is removed on maturation; sequence QPLEDR. Disulfide bonds link Cys-30-Cys-79, Cys-40-Cys-70, Cys-41-Cys-53, and Cys-80-Cys-91.

It belongs to the cerato-ulmin hydrophobin family. Homotetramer. Further self-assembles to form highly ordered films at water-air interfaces through intermolecular interactions.

It is found in the secreted. The protein resides in the cell wall. In terms of biological role, aerial growth, conidiation, and dispersal of filamentous fungi in the environment rely upon a capability of their secreting small amphipathic proteins called hydrophobins (HPBs) with low sequence identity. Class I can self-assemble into an outermost layer of rodlet bundles on aerial cell surfaces, conferring cellular hydrophobicity that supports fungal growth, development and dispersal; whereas Class II form highly ordered films at water-air interfaces through intermolecular interactions but contribute nothing to the rodlet structure. Hbf1 is a class II hydrophobin that has a role in hyphal development and is in particular required for the formation of aerial hyphae. The protein is Class II hydrophobin 1 of Hypocrea jecorina (Trichoderma reesei).